The sequence spans 416 residues: MRIPNLKDLLEEGVSGRCVLVRCDLNVPLGDDGAITDLGRVTASVPTLKALLEAGAKIVVAAHLGRPKNGPDPKLSLEPVAAALGEQLGQNVQLVCSTDRSPVGGDALACVERLTDGDLLLLQNIRFDPRETSKVDDERLALAKQLVELVGSAGAFVSDGFGVVHRRQASVYDVATLLPHYAGILVADEIRILEQLTSSAKRPYAVVLGGSKVSDKLGVIESLATKADSIVLGGGMCFTFLAAQGFSVGKSLLETEMIETCRSLLDTYADVLRLPMDIVVTEKFVADSPPQTVAADAIPDGLMGLDIGPESVKRFATLLSNASTIFWNGPMGVFEFPAYAAGTRGVAEAIVAVTGKGAFSVVGGGDSAAAMRALSLPEGSVSHLSTGGGASLEYLEGKTLPGIEVLGREQPRGGDS.

Substrate-binding positions include 24–26 (DLN), R40, 63–66 (HLGR), R126, and R166. ATP is bound by residues K216, G304, E335, and 364 to 367 (GGDS).

It belongs to the phosphoglycerate kinase family. As to quaternary structure, monomer.

The protein localises to the cytoplasm. The enzyme catalyses (2R)-3-phosphoglycerate + ATP = (2R)-3-phospho-glyceroyl phosphate + ADP. It participates in carbohydrate degradation; glycolysis; pyruvate from D-glyceraldehyde 3-phosphate: step 2/5. This chain is Phosphoglycerate kinase, found in Mycobacterium leprae (strain Br4923).